We begin with the raw amino-acid sequence, 215 residues long: Cytochrome b6 (215 aa).

Residues 32 to 52 (IFYCLGGITLTCFLVQVATGF) traverse the membrane as a helical segment. Residue C35 participates in heme c binding. Residues H86 and H100 each contribute to the heme b site. The next 3 membrane-spanning stretches (helical) occupy residues 90–110 (ASMM…TGGF), 116–136 (LTWV…VTGY), and 186–206 (LHTF…FLMI). The heme b site is built by H187 and H202.

The protein belongs to the cytochrome b family. PetB subfamily. As to quaternary structure, the 4 large subunits of the cytochrome b6-f complex are cytochrome b6, subunit IV (17 kDa polypeptide, PetD), cytochrome f and the Rieske protein, while the 4 small subunits are PetG, PetL, PetM and PetN. The complex functions as a dimer. It depends on heme b as a cofactor. The cofactor is heme c.

It is found in the plastid. The protein localises to the chloroplast thylakoid membrane. Component of the cytochrome b6-f complex, which mediates electron transfer between photosystem II (PSII) and photosystem I (PSI), cyclic electron flow around PSI, and state transitions. This is Cytochrome b6 from Arabidopsis thaliana (Mouse-ear cress).